The sequence spans 122 residues: MARIAGVDLPNKKRMEYALTYIYGIGLHNSRLILNAVGIDFNKRAFELTEDEAAAIRKEIQENYMVEGDLRKKVAMDIKSLMDLGSYRGLRHRKGLPCRGQKTKTNARTRKGKKKTVGAATK.

The span at 95–116 shows a compositional bias: basic residues; sequence GLPCRGQKTKTNARTRKGKKKT. Residues 95–122 are disordered; sequence GLPCRGQKTKTNARTRKGKKKTVGAATK.

This sequence belongs to the universal ribosomal protein uS13 family. As to quaternary structure, part of the 30S ribosomal subunit. Forms a loose heterodimer with protein S19. Forms two bridges to the 50S subunit in the 70S ribosome.

Its function is as follows. Located at the top of the head of the 30S subunit, it contacts several helices of the 16S rRNA. In the 70S ribosome it contacts the 23S rRNA (bridge B1a) and protein L5 of the 50S subunit (bridge B1b), connecting the 2 subunits; these bridges are implicated in subunit movement. Contacts the tRNAs in the A and P-sites. The protein is Small ribosomal subunit protein uS13 of Aliarcobacter butzleri (strain RM4018) (Arcobacter butzleri).